We begin with the raw amino-acid sequence, 144 residues long: Ribosome-binding factor A (144 aa).

Positions 120–144 (DKRRMAESGREEDDAAPDETTEDNA) are disordered. The segment covering 129–144 (REEDDAAPDETTEDNA) has biased composition (acidic residues).

It belongs to the RbfA family. As to quaternary structure, monomer. Binds 30S ribosomal subunits, but not 50S ribosomal subunits or 70S ribosomes.

It is found in the cytoplasm. Its function is as follows. One of several proteins that assist in the late maturation steps of the functional core of the 30S ribosomal subunit. Associates with free 30S ribosomal subunits (but not with 30S subunits that are part of 70S ribosomes or polysomes). Required for efficient processing of 16S rRNA. May interact with the 5'-terminal helix region of 16S rRNA. The sequence is that of Ribosome-binding factor A from Aeromonas hydrophila subsp. hydrophila (strain ATCC 7966 / DSM 30187 / BCRC 13018 / CCUG 14551 / JCM 1027 / KCTC 2358 / NCIMB 9240 / NCTC 8049).